The chain runs to 309 residues: Serine/threonine-protein phosphatase 2A catalytic subunit beta isoform (309 aa).

Positions 57, 59, 85, and 117 each coordinate Mn(2+). The Proton donor role is filled by histidine 118. 2 residues coordinate Mn(2+): histidine 167 and histidine 241. Tyrosine 307 is subject to Phosphotyrosine. A Leucine methyl ester modification is found at leucine 309.

Belongs to the PPP phosphatase family. PP-1 subfamily. PP2A consists of a common heterodimeric core enzyme (composed of a 36 kDa catalytic subunit (subunit C) and a 65 kDa constant regulatory subunit (PR65) (subunit A)) that associates with a variety of regulatory subunits. Proteins that associate with the core dimer include three families of regulatory subunits B (the R2/B/PR55/B55, R3/B''/PR72/PR130/PR59 and R5/B'/B56 families), the 48 kDa variable regulatory subunit, viral proteins, and cell signaling molecules. Binds PPME1. May indirectly interact with SGO1, most probably through regulatory B56 subunits. Interacts with CTTNBP2NL. Interacts with PTPA. Found in a complex with at least ARL2, PPP2CB, PPP2R1A, PPP2R2A, PPP2R5E and TBCD. Interacts with TBCD. Part of the core of STRIPAK complexes composed of PP2A catalytic and scaffolding subunits, the striatins (PP2A regulatory subunits), the striatin-associated proteins MOB4, STRIP1 and STRIP2, PDCD10 and members of the STE20 kinases, such as STK24 and STK26. Mn(2+) serves as cofactor. In terms of processing, reversibly methyl esterified on Leu-309 by leucine carboxyl methyltransferase 1 (Lcmt1) and protein phosphatase methylesterase 1 (Ppme1). Carboxyl methylation influences the affinity of the catalytic subunit for the different regulatory subunits, thereby modulating the PP2A holoenzyme's substrate specificity, enzyme activity and cellular localization. Post-translationally, phosphorylation of either threonine (by autophosphorylation-activated protein kinase) or tyrosine results in inactivation of the phosphatase. Auto-dephosphorylation has been suggested as a mechanism for reactivation. May be monoubiquitinated by NOSIP.

Its subcellular location is the cytoplasm. It localises to the nucleus. The protein resides in the chromosome. It is found in the centromere. The protein localises to the cytoskeleton. Its subcellular location is the spindle pole. It catalyses the reaction O-phospho-L-seryl-[protein] + H2O = L-seryl-[protein] + phosphate. The catalysed reaction is O-phospho-L-threonyl-[protein] + H2O = L-threonyl-[protein] + phosphate. Functionally, catalytic subunit of protein phosphatase 2A (PP2A), a serine/threonine phosphatase involved in the regulation of a wide variety of enzymes, signal transduction pathways, and cellular events. PP2A can modulate the activity of phosphorylase B kinase, casein kinase 2, mitogen-stimulated S6 kinase, and MAP-2 kinase. Part of the striatin-interacting phosphatase and kinase (STRIPAK) complexes. STRIPAK complexes have critical roles in protein (de)phosphorylation and are regulators of multiple signaling pathways including Hippo, MAPK, nuclear receptor and cytoskeleton remodeling. Different types of STRIPAK complexes are involved in a variety of biological processes such as cell growth, differentiation, apoptosis, metabolism and immune regulation. This is Serine/threonine-protein phosphatase 2A catalytic subunit beta isoform (Ppp2cb) from Mus musculus (Mouse).